The primary structure comprises 453 residues: Glutamyl-tRNA(Gln) amidotransferase subunit A (453 aa).

Residues K53 and S128 each act as charge relay system in the active site. S152 functions as the Acyl-ester intermediate in the catalytic mechanism.

This sequence belongs to the amidase family. GatA subfamily. In terms of assembly, heterotrimer of A, B and C subunits.

The enzyme catalyses L-glutamyl-tRNA(Gln) + L-glutamine + ATP + H2O = L-glutaminyl-tRNA(Gln) + L-glutamate + ADP + phosphate + H(+). Functionally, allows the formation of correctly charged Gln-tRNA(Gln) through the transamidation of misacylated Glu-tRNA(Gln) in organisms which lack glutaminyl-tRNA synthetase. The reaction takes place in the presence of glutamine and ATP through an activated gamma-phospho-Glu-tRNA(Gln). This is Glutamyl-tRNA(Gln) amidotransferase subunit A from Helicobacter pylori (strain P12).